A 361-amino-acid polypeptide reads, in one-letter code: Phospho-N-acetylmuramoyl-pentapeptide-transferase (361 aa).

The next 10 helical transmembrane spans lie at 25 to 45 (TGGA…WIID), 71 to 91 (TPTM…VLWA), 94 to 114 (LNPY…VGFY), 133 to 153 (WRLL…VRLG), 169 to 189 (VAIN…VGAG), 200 to 220 (GLAI…SYLA), 240 to 260 (LSVL…FNAP), 264 to 284 (IFMG…IAVA), 289 to 309 (IVLA…IVQV), and 338 to 358 (QIVI…LSTL).

It belongs to the glycosyltransferase 4 family. MraY subfamily. Mg(2+) is required as a cofactor.

Its subcellular location is the cell inner membrane. The catalysed reaction is UDP-N-acetyl-alpha-D-muramoyl-L-alanyl-gamma-D-glutamyl-meso-2,6-diaminopimeloyl-D-alanyl-D-alanine + di-trans,octa-cis-undecaprenyl phosphate = di-trans,octa-cis-undecaprenyl diphospho-N-acetyl-alpha-D-muramoyl-L-alanyl-D-glutamyl-meso-2,6-diaminopimeloyl-D-alanyl-D-alanine + UMP. Its pathway is cell wall biogenesis; peptidoglycan biosynthesis. Its function is as follows. Catalyzes the initial step of the lipid cycle reactions in the biosynthesis of the cell wall peptidoglycan: transfers peptidoglycan precursor phospho-MurNAc-pentapeptide from UDP-MurNAc-pentapeptide onto the lipid carrier undecaprenyl phosphate, yielding undecaprenyl-pyrophosphoryl-MurNAc-pentapeptide, known as lipid I. The sequence is that of Phospho-N-acetylmuramoyl-pentapeptide-transferase from Rhodopseudomonas palustris (strain BisB18).